We begin with the raw amino-acid sequence, 475 residues long: Glycogen synthase (475 aa).

Lys-15 lines the ADP-alpha-D-glucose pocket.

Belongs to the glycosyltransferase 1 family. Bacterial/plant glycogen synthase subfamily.

The enzyme catalyses [(1-&gt;4)-alpha-D-glucosyl](n) + ADP-alpha-D-glucose = [(1-&gt;4)-alpha-D-glucosyl](n+1) + ADP + H(+). The protein operates within glycan biosynthesis; glycogen biosynthesis. Synthesizes alpha-1,4-glucan chains using ADP-glucose. The protein is Glycogen synthase of Chlamydia felis (strain Fe/C-56) (Chlamydophila felis).